A 562-amino-acid chain; its full sequence is Solute carrier family 40 member 1 (562 aa).

Residues M1 to S20 lie on the Cytoplasmic side of the membrane. The helical transmembrane segment at A21–L50 threads the bilayer. D36 is a Fe cation binding site. Topologically, residues Y51–S54 are extracellular. Residues L55–D81 traverse the membrane as a helical segment. At K82–P84 the chain is on the cytoplasmic side. The chain crosses the membrane as a helical span at residues R85–Q115. Residues Q116–G123 lie on the Extracellular side of the membrane. The chain crosses the membrane as a helical span at residues W124–V159. The Cytoplasmic portion of the chain corresponds to A160–G161. Residues D162–I192 traverse the membrane as a helical segment. Residues M193 to F199 lie on the Extracellular side of the membrane. A helical transmembrane segment spans residues I200–K226. Over T227 to S300 the chain is Cytoplasmic. Residues I301–Y327 form a helical membrane-spanning segment. C320 provides a ligand contact to Fe cation. At T328–N332 the chain is on the extracellular side. Residues G333–K360 form a helical membrane-spanning segment. Residues C361 to G362 are Cytoplasmic-facing. A helical membrane pass occupies residues L363–V385. The Extracellular segment spans residues F386–M444. Residues S445–N474 traverse the membrane as a helical segment. Residues V475 to E479 lie on the Cytoplasmic side of the membrane. The helical transmembrane segment at R480 to L504 threads the bilayer. H498 is a Fe cation binding site. Residues A505–N507 lie on the Extracellular side of the membrane. A helical transmembrane segment spans residues P508–A533. The Cytoplasmic segment spans residues Y534–V562.

Belongs to the ferroportin (FP) (TC 2.A.100) family. SLC40A subfamily. Expressed in the yolk sac and placenta.

It is found in the cell membrane. Its subcellular location is the basolateral cell membrane. It catalyses the reaction Fe(2+)(in) = Fe(2+)(out). Its function is as follows. Transports Fe(2+) from the inside of a cell to the outside of the cell, playing a key role for maintaining systemic iron homeostasis. May be involved in transfer of Fe(2+) between maternal and fetal circulation. The protein is Solute carrier family 40 member 1 (slc40a1) of Danio rerio (Zebrafish).